The sequence spans 323 residues: Serine/threonine-protein phosphatase PP1-gamma catalytic subunit B (323 aa).

Mn(2+) is bound by residues D64, H66, D92, and N124. H125 serves as the catalytic Proton donor. Positions 173 and 248 each coordinate Mn(2+). The segment at 301-323 (KKKPNASRPVTPPRGIITKQAKK) is disordered.

The protein belongs to the PPP phosphatase family. PP-1 subfamily. In terms of assembly, PP1 comprises a catalytic subunit, ppp1c1, ppp1cb or ppp1cc, which is folded into its native form by inhibitor 2 and glycogen synthetase kinase 3, and then is complexed to one or several targeting or regulatory subunits. Requires Mn(2+) as cofactor.

The protein localises to the cytoplasm. It localises to the nucleus. Its subcellular location is the cleavage furrow. The protein resides in the nucleolus. It is found in the nucleoplasm. The protein localises to the chromosome. It localises to the centromere. Its subcellular location is the kinetochore. The protein resides in the nucleus speckle. It is found in the midbody. The protein localises to the mitochondrion. The enzyme catalyses O-phospho-L-seryl-[protein] + H2O = L-seryl-[protein] + phosphate. It carries out the reaction O-phospho-L-threonyl-[protein] + H2O = L-threonyl-[protein] + phosphate. Its function is as follows. Protein phosphatase that associates with over 200 regulatory proteins to form highly specific holoenzymes which dephosphorylate hundreds of biological targets. Protein phosphatase 1 (PP1) is essential for cell division, and participates in the regulation of glycogen metabolism, muscle contractility and protein synthesis. Promotes nuclear envelope reassembly by targeting nuclear membrane vesicles to chromatin at the end of mitosis. Acts by dephosphorylating membrane proteins such as lamin B receptor (lbr) to regulate the binding of membrane proteins to chromatin. This chain is Serine/threonine-protein phosphatase PP1-gamma catalytic subunit B (ppp1cc-b), found in Xenopus laevis (African clawed frog).